Reading from the N-terminus, the 293-residue chain is Ribosomal protein L11 methyltransferase (293 aa).

The S-adenosyl-L-methionine site is built by Thr-145, Gly-166, Asp-188, and Asn-230.

The protein belongs to the methyltransferase superfamily. PrmA family.

Its subcellular location is the cytoplasm. It catalyses the reaction L-lysyl-[protein] + 3 S-adenosyl-L-methionine = N(6),N(6),N(6)-trimethyl-L-lysyl-[protein] + 3 S-adenosyl-L-homocysteine + 3 H(+). Its function is as follows. Methylates ribosomal protein L11. This is Ribosomal protein L11 methyltransferase from Actinobacillus pleuropneumoniae serotype 3 (strain JL03).